A 375-amino-acid chain; its full sequence is Succinyl-diaminopimelate desuccinylase (375 aa).

Histidine 66 lines the Zn(2+) pocket. Residue aspartate 68 is part of the active site. Aspartate 99 provides a ligand contact to Zn(2+). The Proton acceptor role is filled by glutamate 133. Zn(2+) is bound by residues glutamate 134, glutamate 162, and histidine 348.

The protein belongs to the peptidase M20A family. DapE subfamily. As to quaternary structure, homodimer. Requires Zn(2+) as cofactor. Co(2+) serves as cofactor.

The enzyme catalyses N-succinyl-(2S,6S)-2,6-diaminopimelate + H2O = (2S,6S)-2,6-diaminopimelate + succinate. It functions in the pathway amino-acid biosynthesis; L-lysine biosynthesis via DAP pathway; LL-2,6-diaminopimelate from (S)-tetrahydrodipicolinate (succinylase route): step 3/3. Its function is as follows. Catalyzes the hydrolysis of N-succinyl-L,L-diaminopimelic acid (SDAP), forming succinate and LL-2,6-diaminopimelate (DAP), an intermediate involved in the bacterial biosynthesis of lysine and meso-diaminopimelic acid, an essential component of bacterial cell walls. The chain is Succinyl-diaminopimelate desuccinylase from Shigella boydii serotype 18 (strain CDC 3083-94 / BS512).